A 238-amino-acid polypeptide reads, in one-letter code: Ethylene-responsive transcription factor ERN3 (238 aa).

A DNA-binding region (AP2/ERF) is located at residues 24–81; the sequence is KFVGVRQRASGKWAAEIKDTSKNIRMWLGTYKTAEEAARAYDEAAFLLRGTNTRTNFS.

This sequence belongs to the AP2/ERF transcription factor family. ERF subfamily. In terms of tissue distribution, expressed in roots, root hairs and leaves.

The protein resides in the nucleus. Its function is as follows. Transcription factor involved in symbiotic nodule signaling in response to rhizobial Nod factors (NFs). Binds to the GCC box (NF-responsive box) of ENOD11 promoter. May act as transcriptional repressor of NF-responsive box-containing target gene promoters in root hairs. The sequence is that of Ethylene-responsive transcription factor ERN3 from Medicago truncatula (Barrel medic).